The chain runs to 204 residues: Methylthioribulose-1-phosphate dehydratase (204 aa).

The Zn(2+) site is built by H94 and H96.

The protein belongs to the aldolase class II family. MtnB subfamily. Requires Zn(2+) as cofactor.

It catalyses the reaction 5-(methylsulfanyl)-D-ribulose 1-phosphate = 5-methylsulfanyl-2,3-dioxopentyl phosphate + H2O. It functions in the pathway amino-acid biosynthesis; L-methionine biosynthesis via salvage pathway; L-methionine from S-methyl-5-thio-alpha-D-ribose 1-phosphate: step 2/6. Its function is as follows. Catalyzes the dehydration of methylthioribulose-1-phosphate (MTRu-1-P) into 2,3-diketo-5-methylthiopentyl-1-phosphate (DK-MTP-1-P). This Serratia proteamaculans (strain 568) protein is Methylthioribulose-1-phosphate dehydratase.